The chain runs to 582 residues: Transcription factor PCF5 (582 aa).

2 disordered regions span residues alanine 30–histidine 78 and serine 123–glycine 195. Gly residues predominate over residues glycine 51–glycine 64. In terms of domain architecture, TCP spans arginine 213 to leucine 271. 3 disordered regions span residues glycine 283–aspartate 306, methionine 402–glutamine 423, and arginine 548–histidine 582.

In terms of assembly, forms homodimers and heterodimers with PCF2.

The protein localises to the nucleus. Transcription activator. Binds the promoter core sequence 5'-GGNCC-3'. The chain is Transcription factor PCF5 (PCF5) from Oryza sativa subsp. indica (Rice).